The primary structure comprises 132 residues: MGRDTIANIITCIRNADMDKKRMVRIASTNITENIVKIILQEGFIENVRKHRENNKNFLVLTLRHKRNRKGTYRKTLKRISRSGLRIYSNYQRIPRISGGMGVVILSTSRGIMTDREARREGIGGEILCYIW.

Belongs to the universal ribosomal protein uS8 family. In terms of assembly, part of the 30S ribosomal subunit.

It localises to the plastid. The protein localises to the chloroplast. In terms of biological role, one of the primary rRNA binding proteins, it binds directly to 16S rRNA central domain where it helps coordinate assembly of the platform of the 30S subunit. In Amborella trichopoda, this protein is Small ribosomal subunit protein uS8c (rps8).